We begin with the raw amino-acid sequence, 816 residues long: Subtilisin-like protease SBT2.6 (816 aa).

The N-terminal stretch at 1 to 19 is a signal peptide; it reads MDIGCKVLVFFTCFLTVTA. The propeptide at 20-126 is activation peptide; that stretch reads EIYIVTMEGE…VDRDWKVRKL (107 aa). An Inhibitor I9 domain is found at 22–124; it reads YIVTMEGEPI…KSVDRDWKVR (103 aa). The Peptidase S8 domain maps to 120–672; sequence DWKVRKLTTH…SGHVNPSAAL (553 aa). Catalysis depends on charge relay system residues aspartate 160 and histidine 235. Residues 418–492 enclose the PA domain; that stretch reads DCQKPEVLNK…SCIPGILITD (75 aa). N-linked (GlcNAc...) asparagine glycans are attached at residues asparagine 504 and asparagine 578. Residue serine 597 is the Charge relay system of the active site. Asparagine 702 carries N-linked (GlcNAc...) asparagine glycosylation.

Belongs to the peptidase S8 family.

Its subcellular location is the secreted. This Arabidopsis thaliana (Mouse-ear cress) protein is Subtilisin-like protease SBT2.6.